We begin with the raw amino-acid sequence, 350 residues long: Selenide, water dikinase (350 aa).

U15 is an active-site residue. Position 15 (U15) is a non-standard amino acid, selenocysteine. ATP is bound by residues K18 and 47-49 (HNE). Residue D50 coordinates Mg(2+). ATP-binding positions include D67, D90, and 138–140 (GHS). D90 contacts Mg(2+). A Mg(2+)-binding site is contributed by D227.

The protein belongs to the selenophosphate synthase 1 family. Class I subfamily. As to quaternary structure, homodimer. The cofactor is Mg(2+).

It carries out the reaction hydrogenselenide + ATP + H2O = selenophosphate + AMP + phosphate + 2 H(+). Functionally, synthesizes selenophosphate from selenide and ATP. The sequence is that of Selenide, water dikinase from Nitratidesulfovibrio vulgaris (strain DSM 19637 / Miyazaki F) (Desulfovibrio vulgaris).